Here is a 173-residue protein sequence, read N- to C-terminus: NAD(P)H-quinone oxidoreductase subunit I, chloroplastic (173 aa).

4Fe-4S ferredoxin-type domains are found at residues 55–84 (GRIHFEFDKCIACEVCVRVCPINLPVVDWD) and 95–124 (RSYSIDFGVCIFCGNCVEYCPTNCLSMTEE). [4Fe-4S] cluster-binding residues include cysteine 64, cysteine 67, cysteine 70, cysteine 74, cysteine 104, cysteine 107, cysteine 110, and cysteine 114.

This sequence belongs to the complex I 23 kDa subunit family. In terms of assembly, NDH is composed of at least 16 different subunits, 5 of which are encoded in the nucleus. It depends on [4Fe-4S] cluster as a cofactor.

Its subcellular location is the plastid. The protein localises to the chloroplast thylakoid membrane. It catalyses the reaction a plastoquinone + NADH + (n+1) H(+)(in) = a plastoquinol + NAD(+) + n H(+)(out). The enzyme catalyses a plastoquinone + NADPH + (n+1) H(+)(in) = a plastoquinol + NADP(+) + n H(+)(out). NDH shuttles electrons from NAD(P)H:plastoquinone, via FMN and iron-sulfur (Fe-S) centers, to quinones in the photosynthetic chain and possibly in a chloroplast respiratory chain. The immediate electron acceptor for the enzyme in this species is believed to be plastoquinone. Couples the redox reaction to proton translocation, and thus conserves the redox energy in a proton gradient. The sequence is that of NAD(P)H-quinone oxidoreductase subunit I, chloroplastic from Nephroselmis olivacea (Green alga).